We begin with the raw amino-acid sequence, 861 residues long: Alpha-actinin A (861 aa).

The segment at methionine 1–histidine 239 is actin-binding. Calponin-homology (CH) domains lie at isoleucine 22–alanine 127 and leucine 136–serine 242. Spectrin repeat units follow at residues histidine 240–lysine 365, alanine 366–lysine 480, serine 481–lysine 601, and valine 602–valine 714. EF-hand domains are found at residues glutamate 729–glutamate 764 and leucine 765–glycine 800. Aspartate 742, aspartate 744, aspartate 746, lysine 748, glutamate 753, aspartate 778, aspartate 780, asparagine 782, threonine 784, and glutamate 789 together coordinate Ca(2+).

Belongs to the alpha-actinin family. Homodimer; antiparallel.

The protein resides in the cytoplasm. Its subcellular location is the cell cortex. It localises to the contractile vacuole. The protein localises to the cytoplasmic vesicle. It is found in the phagosome. Its function is as follows. F-actin cross-linking protein which is thought to anchor actin to a variety of intracellular structures. This is a bundling protein. Increases the actin-stimulated ATPase activity of myosin. Involved in vegetative cell growth, phagocytosis, motility and development, probably through stabilization of the actin network in the cortical cytoskeleton. The chain is Alpha-actinin A (abpA) from Dictyostelium discoideum (Social amoeba).